The sequence spans 218 residues: Mitochondrial fission factor (218 aa).

Over 1–198 (MAEISRIQYE…ENKERAKREM (198 aa)) the chain is Cytoplasmic. Residue Thr-89 is modified to Phosphothreonine. Ser-129, Ser-131, Ser-146, and Ser-171 each carry phosphoserine. Positions 167-198 (VDAASLRRQIIKLNRRLQLLEEENKERAKREM) form a coiled coil. The chain crosses the membrane as a helical; Anchor for type IV membrane protein span at residues 199 to 216 (VMYSITVAFWLLNSWLWF). The Mitochondrial intermembrane portion of the chain corresponds to 217 to 218 (RR).

It belongs to the Tango11 family. In terms of assembly, homodimer. Interacts with DNM1L. Interacts with C11orf65/MFI; the interaction inhibits MFF interaction with DNM1L.

It is found in the mitochondrion outer membrane. It localises to the peroxisome. Its subcellular location is the cytoplasmic vesicle. The protein resides in the secretory vesicle. The protein localises to the synaptic vesicle. Its function is as follows. Plays a role in mitochondrial and peroxisomal fission. Promotes the recruitment and association of the fission mediator dynamin-related protein 1 (DNM1L) to the mitochondrial surface. May be involved in regulation of synaptic vesicle membrane dynamics by recruitment of DNM1L to clathrin-containing vesicles. The sequence is that of Mitochondrial fission factor (MFF) from Bos taurus (Bovine).